A 249-amino-acid polypeptide reads, in one-letter code: Inhibitor of growth protein 4 (249 aa).

Residues 25 to 118 (FQLMRDLDQR…ADLKEKQIES (94 aa)) are a coiled coil. Residues 115 to 160 (QIESSDYDSSSSKGKKKGRAQKEKKAARARSKGKNSDEEAPKTAQK) form a disordered region. Residues 196 to 245 (PTYCLCHQVSYGEMIGCDNPDCSIEWFHFACVGLTTKPRGKWFCPRCSQE) form a PHD-type zinc finger. Residues cysteine 199, cysteine 201, cysteine 212, cysteine 217, histidine 223, cysteine 226, cysteine 239, and cysteine 242 each contribute to the Zn(2+) site.

It belongs to the ING family. Homodimer. Component of the HBO1 complex.

It localises to the nucleus. In terms of biological role, component of HBO1 complexes, which specifically mediate acetylation of histone H3 at 'Lys-14' (H3K14ac), and have reduced activity toward histone H4. Through chromatin acetylation it may function in DNA replication. This is Inhibitor of growth protein 4 (ING4) from Gallus gallus (Chicken).